Reading from the N-terminus, the 197-residue chain is Tyrosine-protein phosphatase-like protein OCA2 (197 aa).

The Tyrosine-protein phosphatase domain maps to 10–160; it reads SPVVSTDVSL…FETNLKIPRN (151 aa). A Phosphoserine modification is found at Ser-181.

This sequence belongs to the protein-tyrosine phosphatase family.

The protein resides in the cytoplasm. Functionally, required for normal growth in the presence of linoleic acid hydroperoxide (LoaOOH). The chain is Tyrosine-protein phosphatase-like protein OCA2 (OCA2) from Saccharomyces cerevisiae (strain ATCC 204508 / S288c) (Baker's yeast).